The chain runs to 227 residues: UPF0758 protein llmg_1515 (227 aa).

Residues 103-225 (QVLSSKEYGM…YYSFRERDSN (123 aa)) enclose the MPN domain. The Zn(2+) site is built by His-174, His-176, and Asp-187. Positions 174–187 (HNHPSGNLQPSQAD) match the JAMM motif motif.

Belongs to the UPF0758 family.

This is UPF0758 protein llmg_1515 from Lactococcus lactis subsp. cremoris (strain MG1363).